The chain runs to 100 residues: MICOS complex subunit MIC12 (100 aa).

A helical transmembrane segment spans residues 10 to 26 (FATISSVAAASLYLYAI).

It belongs to the MICOS complex subunit Mic12 family. Component of the mitochondrial contact site and cristae organizing system (MICOS) complex.

Its subcellular location is the mitochondrion inner membrane. Component of the MICOS complex, a large protein complex of the mitochondrial inner membrane that plays crucial roles in the maintenance of crista junctions, inner membrane architecture, and formation of contact sites to the outer membrane. The protein is MICOS complex subunit MIC12 (AIM5) of Vanderwaltozyma polyspora (strain ATCC 22028 / DSM 70294 / BCRC 21397 / CBS 2163 / NBRC 10782 / NRRL Y-8283 / UCD 57-17) (Kluyveromyces polysporus).